The following is a 185-amino-acid chain: ATP synthase subunit b (185 aa).

Residues 26–46 (LVLIGFAILLFIVIKFVVPMF) form a helical membrane-spanning segment.

It belongs to the ATPase B chain family. In terms of assembly, F-type ATPases have 2 components, F(1) - the catalytic core - and F(0) - the membrane proton channel. F(1) has five subunits: alpha(3), beta(3), gamma(1), delta(1), epsilon(1). F(0) has three main subunits: a(1), b(2) and c(10-14). The alpha and beta chains form an alternating ring which encloses part of the gamma chain. F(1) is attached to F(0) by a central stalk formed by the gamma and epsilon chains, while a peripheral stalk is formed by the delta and b chains.

It is found in the cell membrane. F(1)F(0) ATP synthase produces ATP from ADP in the presence of a proton or sodium gradient. F-type ATPases consist of two structural domains, F(1) containing the extramembraneous catalytic core and F(0) containing the membrane proton channel, linked together by a central stalk and a peripheral stalk. During catalysis, ATP synthesis in the catalytic domain of F(1) is coupled via a rotary mechanism of the central stalk subunits to proton translocation. Functionally, component of the F(0) channel, it forms part of the peripheral stalk, linking F(1) to F(0). This Renibacterium salmoninarum (strain ATCC 33209 / DSM 20767 / JCM 11484 / NBRC 15589 / NCIMB 2235) protein is ATP synthase subunit b.